A 154-amino-acid polypeptide reads, in one-letter code: MGLSDGEWQLVLNVWGKVEADIPSHGQEVLIRLFKGHPETLEKFDKFKHLKSEDEMKASEDLKKHGATVLTALGGILKKKGHHEAEIKPLAQSHATKHKIPVKYLELISESIIQVLQSKHPGDFGADAQGAMNKALELFRNDMAAKYKELGFQG.

In terms of domain architecture, Globin spans G2–K148. S4 carries the post-translational modification Phosphoserine. H65 is a binding site for nitrite. O2 is bound at residue H65. T68 is subject to Phosphothreonine. H94 serves as a coordination point for heme b.

Belongs to the globin family. As to quaternary structure, monomeric.

The protein localises to the cytoplasm. It localises to the sarcoplasm. The enzyme catalyses Fe(III)-heme b-[protein] + nitric oxide + H2O = Fe(II)-heme b-[protein] + nitrite + 2 H(+). It carries out the reaction H2O2 + AH2 = A + 2 H2O. In terms of biological role, monomeric heme protein which primary function is to store oxygen and facilitate its diffusion within muscle tissues. Reversibly binds oxygen through a pentacoordinated heme iron and enables its timely and efficient release as needed during periods of heightened demand. Depending on the oxidative conditions of tissues and cells, and in addition to its ability to bind oxygen, it also has a nitrite reductase activity whereby it regulates the production of bioactive nitric oxide. Under stress conditions, like hypoxia and anoxia, it also protects cells against reactive oxygen species thanks to its pseudoperoxidase activity. The protein is Myoglobin (MB) of Erythrocebus patas (Red guenon).